The following is a 377-amino-acid chain: Heat stress transcription factor B-2b (377 aa).

The interval 1 to 56 (MPGEQTGETPTVAGVGGGGAGCSAGNSGGSSGCGAGGGGGGSGGGGGGGGDSQRSI) is disordered. Gly residues predominate over residues 14 to 51 (GVGGGGAGCSAGNSGGSSGCGAGGGGGGSGGGGGGGGD). Residues 57–151 (PTPFLTKTYQ…LLRDIQRRKI (95 aa)) mediate DNA binding. The segment at 220–265 (TTSCTTAPELVEENERLRKDNERLRKEMTKLKGLYANIYTLMANFT) is hydrophobic repeat HR-A/B. The Nuclear localization signal motif lies at 323–327 (KRARR). The disordered stretch occupies residues 326–377 (RREEELGAAEEEDDDRREAAAQEGEQSSDVKAEPMEENNSGNHNGSWLELGK). Acidic residues predominate over residues 331-340 (LGAAEEEDDD).

This sequence belongs to the HSF family. Class B subfamily. As to quaternary structure, homotrimer. Post-translationally, exhibits temperature-dependent phosphorylation.

It localises to the nucleus. In terms of biological role, transcriptional regulator that specifically binds DNA sequence 5'-AGAAnnTTCT-3' known as heat shock promoter elements (HSE). The polypeptide is Heat stress transcription factor B-2b (HSFB2B) (Arabidopsis thaliana (Mouse-ear cress)).